Consider the following 810-residue polypeptide: S-adenosyl-L-methionine-dependent tRNA 4-demethylwyosine synthase (810 aa).

Disordered regions lie at residues 86 to 116 and 156 to 176; these read NGGGKGGGCCSSKGGKKGGCCSSKGGKKGGC and RSSTPKVFSKNSSSNSRVGKK. Residues 104 to 116 show a composition bias toward low complexity; that stretch reads GCCSSKGGKKGGC. Residues 159–172 are compositionally biased toward polar residues; that stretch reads TPKVFSKNSSSNSR. In terms of domain architecture, Flavodoxin-like spans 205 to 360; that stretch reads IYVLYSSLQG…KIDEWTSLLA (156 aa). Residues 211–215 and 304–337 contribute to the FMN site; these read SLQGA and VLGLGDSESWPEKFCYQAKRADHWISRLGGRRIF. Over residues 374 to 397 the composition is skewed to acidic residues; the sequence is DENADSEEDEEEGNGSDELGDVED. Residues 374-407 form a disordered region; that stretch reads DENADSEEDEEEGNGSDELGDVEDIGGKGSNGKF. A Radical SAM core domain is found at 463–713; it reads FNIASSRCME…ELQRRGLHYD (251 aa). 3 residues coordinate [4Fe-4S] cluster: Cys-479, Cys-483, and Cys-486. Residue Lys-496 forms a Glycyl lysine isopeptide (Lys-Gly) (interchain with G-Cter in ubiquitin) linkage. The disordered stretch occupies residues 782–810; that stretch reads RVYRKDKKKQNKENQETTTRETPLPPIPA.

Belongs to the TYW1 family. It depends on [4Fe-4S] cluster as a cofactor.

The protein resides in the endoplasmic reticulum. It catalyses the reaction N(1)-methylguanosine(37) in tRNA(Phe) + pyruvate + S-adenosyl-L-methionine = 4-demethylwyosine(37) in tRNA(Phe) + 5'-deoxyadenosine + L-methionine + CO2 + H2O. It functions in the pathway tRNA modification; wybutosine-tRNA(Phe) biosynthesis. In terms of biological role, component of the wybutosine biosynthesis pathway. Wybutosine is a hyper modified guanosine with a tricyclic base found at the 3'-position adjacent to the anticodon of eukaryotic phenylalanine tRNA. Catalyzes the condensation of N-methylguanine with 2 carbon atoms from pyruvate to form the tricyclic 4-demethylwyosine, an intermediate in wybutosine biosynthesis. This chain is S-adenosyl-L-methionine-dependent tRNA 4-demethylwyosine synthase (TYW1), found in Saccharomyces cerevisiae (strain ATCC 204508 / S288c) (Baker's yeast).